Reading from the N-terminus, the 62-residue chain is MLVLTRKVGESLLIGDDIEITVLSVRGNQVKLGVNAPKNIVVHREEIYHQIKALADNIPESV.

Belongs to the CsrA/RsmA family. Homodimer; the beta-strands of each monomer intercalate to form a hydrophobic core, while the alpha-helices form wings that extend away from the core.

It localises to the cytoplasm. A key translational regulator that binds mRNA to regulate translation initiation and/or mRNA stability. Mediates global changes in gene expression, shifting from rapid growth to stress survival by linking envelope stress, the stringent response and the catabolite repression systems. Usually binds in the 5'-UTR; binding at or near the Shine-Dalgarno sequence prevents ribosome-binding, repressing translation, binding elsewhere in the 5'-UTR can activate translation and/or stabilize the mRNA. Its function is antagonized by small RNA(s). In Haemophilus ducreyi (strain 35000HP / ATCC 700724), this protein is Translational regulator CsrA.